The primary structure comprises 142 residues: Large ribosomal subunit protein uL13 (142 aa).

It belongs to the universal ribosomal protein uL13 family. Part of the 50S ribosomal subunit.

This protein is one of the early assembly proteins of the 50S ribosomal subunit, although it is not seen to bind rRNA by itself. It is important during the early stages of 50S assembly. The sequence is that of Large ribosomal subunit protein uL13 from Stenotrophomonas maltophilia (strain K279a).